Reading from the N-terminus, the 349-residue chain is Nuclear distribution protein nudE homolog 1-B (349 aa).

The stretch at 22–189 forms a coiled coil; the sequence is VAMKYKQCSE…ELAVQQKQEK (168 aa).

The protein belongs to the nudE family. In terms of assembly, self-associates. Interacts with pafah1b1. Post-translationally, phosphorylated in mitosis.

The protein resides in the cytoplasm. The protein localises to the cytoskeleton. It is found in the microtubule organizing center. Its subcellular location is the centrosome. It localises to the spindle. The protein resides in the chromosome. The protein localises to the centromere. It is found in the kinetochore. Its subcellular location is the cleavage furrow. It localises to the cytoplasmic vesicle membrane. Required for centrosome duplication and formation and function of the mitotic spindle. In Xenopus laevis (African clawed frog), this protein is Nuclear distribution protein nudE homolog 1-B (nde1-b).